Here is a 206-residue protein sequence, read N- to C-terminus: Small ribosomal subunit protein uS4 (206 aa).

Residues 96–156 (SRLDNVVYRM…EKSRNQSRIA (61 aa)) enclose the S4 RNA-binding domain.

This sequence belongs to the universal ribosomal protein uS4 family. In terms of assembly, part of the 30S ribosomal subunit. Contacts protein S5. The interaction surface between S4 and S5 is involved in control of translational fidelity.

Functionally, one of the primary rRNA binding proteins, it binds directly to 16S rRNA where it nucleates assembly of the body of the 30S subunit. With S5 and S12 plays an important role in translational accuracy. The polypeptide is Small ribosomal subunit protein uS4 (Hydrogenovibrio crunogenus (strain DSM 25203 / XCL-2) (Thiomicrospira crunogena)).